Here is a 299-residue protein sequence, read N- to C-terminus: Protoheme IX farnesyltransferase (299 aa).

9 helical membrane passes run 26–46 (VNAL…PDGL), 53–73 (FAAT…NCLI), 94–114 (LHSV…LSVL), 121–141 (LTMW…TLLL), 149–169 (IVIG…AVSG), 175–195 (ALLL…SLAL), 217–239 (YTRL…PFAI), 243–265 (GWIY…WRLL), and 277–297 (FRFS…DHYL).

It belongs to the UbiA prenyltransferase family. Protoheme IX farnesyltransferase subfamily.

It localises to the cell inner membrane. It catalyses the reaction heme b + (2E,6E)-farnesyl diphosphate + H2O = Fe(II)-heme o + diphosphate. It participates in porphyrin-containing compound metabolism; heme O biosynthesis; heme O from protoheme: step 1/1. Functionally, converts heme B (protoheme IX) to heme O by substitution of the vinyl group on carbon 2 of heme B porphyrin ring with a hydroxyethyl farnesyl side group. The chain is Protoheme IX farnesyltransferase from Azoarcus sp. (strain BH72).